The following is a 1063-amino-acid chain: Structural polyprotein (1063 aa).

A disordered region spans residues 1 to 131 (MASTTPITME…LGPPTNPFQA (131 aa)). The tract at residues 30–69 (GASQPRRPRPPRQRDSSTSGDDSGRDSGGPRRRRGNRGRG) is human C1QBP/SF2P32-binding. The residue at position 46 (Ser-46) is a Phosphoserine; by host. A compositionally biased stretch (basic residues) spans 59–69 (PRRRRGNRGRG). Residues 70–87 (QRKDWSRAPPPPEERQEG) show a composition bias toward basic and acidic residues. Positions 93–107 (APKPSRAPPQQPQPP) are enriched in pro residues. Cys-153 and Cys-197 are joined by a disulfide. The functions as E2 signal peptide stretch occupies residues 279–300 (GAPQAFLAGLLLAAVAVGTARA). Residues 301–534 (GLQPRVDMAA…LWLATANALS (234 aa)) are Extracellular-facing. 3 N-linked (GlcNAc...) asparagine; by host glycosylation sites follow: Asn-353, Asn-371, and Asn-429. A helical membrane pass occupies residues 535–555 (LDHALAAFVLLVPWVLIFMVC). At 556 to 582 (RRACRRRGAAAALTAVVLQGYNPPAYG) the chain is on the cytoplasmic side. A functions as E1 signal peptide region spans residues 563–582 (GAAAALTAVVLQGYNPPAYG). The Extracellular portion of the chain corresponds to 583 to 1028 (EEAFTYLCTA…QTWAEWAAAH (446 aa)). Cystine bridges form between Cys-590–Cys-595, Cys-619–Cys-824, Cys-641–Cys-653, Cys-699–Cys-712, Cys-758–Cys-767, Cys-807–Cys-817, Cys-931–Cys-934, and Cys-950–Cys-983. Residue Asn-658 is glycosylated (N-linked (GlcNAc...) asparagine; by host). Asn-670 and Ala-671 together coordinate Ca(2+). Residues Asp-718 and Thr-719 each coordinate Ca(2+). Asn-791 is a glycosylation site (N-linked (GlcNAc...) asparagine; by host). 2 O-linked (GalNAc...) threonine; by host glycosylation sites follow: Thr-1011 and Thr-1012. Residues 1029–1049 (WWQLTLGAICALPLAGLLACC) traverse the membrane as a helical segment. Residues 1050-1063 (AKCLYYLRGAIAPR) lie on the Extracellular side of the membrane.

As to quaternary structure, homodimer; further assembles into homooligomer. Interacts with human C1QBP. Interacts (via N-terminus) with protease/methyltransferase p150. Heterodimer with spike glycoprotein E2. In terms of assembly, heterodimer with spike glycoprotein E1. Structural polyprotein: Specific enzymatic cleavages in vivo yield mature proteins. Two signal peptidase-mediated cleavages within the polyprotein produce the structural proteins capsid, E2, and E1. The E2 signal peptide remains attached to the C-terminus of the capsid protein after cleavage by the signal peptidase. Another signal peptide at E2 C-terminus directs E1 to the ER, with a similar mechanism. In terms of processing, contains three N-linked oligosaccharides. Post-translationally, capsid is phosphorylated on Ser-46 by host. This phosphorylation negatively regulates capsid protein RNA-binding activity. Dephosphorylated by human PP1A.

The protein resides in the virion. It is found in the host cytoplasm. It localises to the host mitochondrion. The protein localises to the virion membrane. Its subcellular location is the host Golgi apparatus membrane. Its function is as follows. Capsid protein interacts with genomic RNA and assembles into icosahedric core particles 65-70 nm in diameter. The resulting nucleocapsid eventually associates with the cytoplasmic domain of E2 at the cell membrane, leading to budding and formation of mature virions from host Golgi membranes. Phosphorylation negatively regulates RNA-binding activity, possibly delaying virion assembly during the viral replication phase. Capsid protein dimerizes and becomes disulfide-linked in the virion. Modulates genomic RNA replication. Modulates subgenomic RNA synthesis by interacting with human C1QBP/SF2P32. Induces both perinuclear clustering of mitochondria and the formation of electron-dense intermitochondrial plaques, both hallmarks of rubella virus infected cells. Induces apoptosis when expressed in transfected cells. Functionally, responsible for viral attachment to target host cell, by binding to the cell receptor. Its transport to the plasma membrane depends on interaction with E1 protein. The surface glycoproteins display an irregular helical organization and a pseudo-tetrameric inner nucleocapsid arrangement. In terms of biological role, class II viral fusion protein. Fusion activity is inactive as long as E1 is bound to E2 in mature virion. After virus attachment to target cell and clathrin-mediated endocytosis, acidification of the endosome would induce dissociation of E1/E2 heterodimer and concomitant trimerization of the E1 subunits. This E1 homotrimer is fusion active, and promotes release of viral nucleocapsid in cytoplasm after endosome and viral membrane fusion. The cytoplasmic tail of spike glycoprotein E1 modulates virus release. The surface glycoproteins display an irregular helical organization and a pseudo-tetrameric inner nucleocapsid arrangement. This chain is Structural polyprotein, found in Rubella virus (strain Cendehill) (RUBV).